The sequence spans 504 residues: Cytochrome P450 3A1 (504 aa).

Heme is bound at residue C443.

Belongs to the cytochrome P450 family. Heme serves as cofactor.

The protein localises to the endoplasmic reticulum membrane. The protein resides in the microsome membrane. It catalyses the reaction an organic molecule + reduced [NADPH--hemoprotein reductase] + O2 = an alcohol + oxidized [NADPH--hemoprotein reductase] + H2O + H(+). Functionally, cytochromes P450 are a group of heme-thiolate monooxygenases. In liver microsomes, this enzyme is involved in an NADPH-dependent electron transport pathway. It oxidizes a variety of structurally unrelated compounds, including steroids, fatty acids, and xenobiotics. In Rattus norvegicus (Rat), this protein is Cytochrome P450 3A1 (Cyp3a1).